The primary structure comprises 231 residues: Large ribosomal subunit protein uL1 (231 aa).

It belongs to the universal ribosomal protein uL1 family. Part of the 50S ribosomal subunit.

In terms of biological role, binds directly to 23S rRNA. The L1 stalk is quite mobile in the ribosome, and is involved in E site tRNA release. Protein L1 is also a translational repressor protein, it controls the translation of the L11 operon by binding to its mRNA. This chain is Large ribosomal subunit protein uL1, found in Cupriavidus pinatubonensis (strain JMP 134 / LMG 1197) (Cupriavidus necator (strain JMP 134)).